The primary structure comprises 1519 residues: Rho guanine nucleotide exchange factor 40 (1519 aa).

2 disordered regions span residues 194 to 237 and 253 to 503; these read VGHQ…PVEG and RGSP…LETV. A compositionally biased stretch (pro residues) spans 200-218; it reads TLPPELPSGPPGLPSPPLP. At S262 the chain carries Phosphoserine. Residues 280 to 290 show a composition bias toward basic residues; that stretch reads KGRHRRHRAWM. Residues 314 to 341 show a composition bias toward low complexity; the sequence is ASPESPPGAEAVPEAAVLEVSEPPAEAV. The segment covering 355 to 367 has biased composition (gly residues); sequence LRGGGGGGQGAEG. T371 carries the post-translational modification Phosphothreonine. Basic residues predominate over residues 374-386; that stretch reads RTGKGNRRKKRAA. At S419 the chain carries Phosphoserine. Over residues 421–457 the composition is skewed to basic and acidic residues; sequence SEHKLPECHLVKEEYEGSGKPESEPKELKTAGEKEPQ. The stretch at 828 to 871 forms a coiled coil; that stretch reads SAEVQERLAQAREALALEENATSQKVLDIFEQRLEQVESGLHRA. Residues S931 and S961 each carry the phosphoserine modification. The stretch at 934-961 forms a coiled coil; that stretch reads ALREWGRCQARCQELERRIQQHVGEEAS. Residues 955–1031 form a disordered region; that stretch reads HVGEEASPRG…ELAPEAEGRP (77 aa). Residues 980 to 996 are compositionally biased toward low complexity; that stretch reads WGPRSPSPSLSSLLLPS. S1082 carries the post-translational modification Phosphoserine. In terms of domain architecture, DH spans 1085–1253; sequence AQQRLVSELI…REQEARGRDL (169 aa). Residues 1265 to 1372 enclose the PH domain; the sequence is DLKEQGQLLH…WTSSIAQLLW (108 aa). Phosphoserine occurs at positions 1433, 1438, and 1474. The interval 1466–1519 is disordered; the sequence is TLDSSGDVSPGPRNSPSLQPPHPGSSTPTLASRGILGLSRQSHARALSDPTTPL. The segment covering 1467-1482 has biased composition (polar residues); the sequence is LDSSGDVSPGPRNSPS. T1492 carries the post-translational modification Phosphothreonine.

In terms of tissue distribution, expressed at higher level in the central nervous system and skeletal muscle and greater abundance in fetal than adult brain (at protein level).

Its subcellular location is the cytoplasm. In terms of biological role, may act as a guanine nucleotide exchange factor (GEF). The polypeptide is Rho guanine nucleotide exchange factor 40 (ARHGEF40) (Homo sapiens (Human)).